The following is a 419-amino-acid chain: 3-isopropylmalate dehydratase large subunit (419 aa).

Residues Cys300, Cys360, and Cys363 each coordinate [4Fe-4S] cluster.

It belongs to the aconitase/IPM isomerase family. LeuC type 2 subfamily. As to quaternary structure, heterodimer of LeuC and LeuD. It depends on [4Fe-4S] cluster as a cofactor.

The enzyme catalyses (2R,3S)-3-isopropylmalate = (2S)-2-isopropylmalate. Its pathway is amino-acid biosynthesis; L-leucine biosynthesis; L-leucine from 3-methyl-2-oxobutanoate: step 2/4. In terms of biological role, catalyzes the isomerization between 2-isopropylmalate and 3-isopropylmalate, via the formation of 2-isopropylmaleate. This is 3-isopropylmalate dehydratase large subunit from Clostridium botulinum (strain Eklund 17B / Type B).